Here is a 620-residue protein sequence, read N- to C-terminus: MAU2 chromatid cohesion factor homolog (620 aa).

TPR repeat units follow at residues 452–485 (GGFYYVQGLHAFHKNSFHEAKRFLRETLKMANAE) and 492–525 (SCSLVLLSHVFLSIGNSKESMNMVTPAMQLASKI).

It belongs to the SCC4/mau-2 family. In terms of assembly, interacts with Nipped-B to form the cohesin loading complex.

It is found in the nucleus. It localises to the nucleoplasm. Required for association of the cohesin complex with chromatin during interphase. Plays a role in sister chromatid cohesion and normal progression through prometaphase. This chain is MAU2 chromatid cohesion factor homolog, found in Drosophila persimilis (Fruit fly).